Here is a 28-residue protein sequence, read N- to C-terminus: WWRELLKKLAFTAAGHLGSVLAAKQSGW.

Belongs to the grammistin family. Group 3 subfamily. Exists as aggregates of 3-4 molecules. Expressed by the skin glands.

The protein resides in the secreted. Its function is as follows. Thanks to its amphiphilic alpha-helice(s), it may integrate into membrane phospholipids, leading to lysis of the membrane. Has no substantial hemolytic activity. Has antibacterial activity with a broad spectrum against various species of bacteria including both Gram-positive and Gram-negative groups. This chain is Grammistin Gs A, found in Grammistes sexlineatus (Goldenstriped soapfish).